The chain runs to 160 residues: Transcription elongation factor GreA (160 aa).

Residues 1 to 72 (MAEKTYPMTQ…QIQILETKIR (72 aa)) adopt a coiled-coil conformation.

Belongs to the GreA/GreB family.

Functionally, necessary for efficient RNA polymerase transcription elongation past template-encoded arresting sites. The arresting sites in DNA have the property of trapping a certain fraction of elongating RNA polymerases that pass through, resulting in locked ternary complexes. Cleavage of the nascent transcript by cleavage factors such as GreA or GreB allows the resumption of elongation from the new 3'terminus. GreA releases sequences of 2 to 3 nucleotides. The polypeptide is Transcription elongation factor GreA (Streptococcus agalactiae serotype Ia (strain ATCC 27591 / A909 / CDC SS700)).